Here is a 226-residue protein sequence, read N- to C-terminus: Glutathione peroxidase 3 (226 aa).

A signal peptide spans 1-24 (MARLFRASCLLSLLLAGFIPPSQG). The active site involves Sec73. Sec73 is a non-standard amino acid (selenocysteine).

This sequence belongs to the glutathione peroxidase family. In terms of assembly, homotetramer. In terms of tissue distribution, secreted in plasma.

It localises to the secreted. The enzyme catalyses 2 glutathione + H2O2 = glutathione disulfide + 2 H2O. The catalysed reaction is tert-butyl hydroperoxide + 2 glutathione = tert-butanol + glutathione disulfide + H2O. Its function is as follows. Protects cells and enzymes from oxidative damage, by catalyzing the reduction of hydrogen peroxide, lipid peroxides and organic hydroperoxide, by glutathione. The protein is Glutathione peroxidase 3 of Bos taurus (Bovine).